Reading from the N-terminus, the 187-residue chain is dCTP deaminase (187 aa).

DCTP contacts are provided by residues Lys-110–Arg-115, Thr-134–Glu-136, Gln-155, Tyr-169, and Gln-179. Glu-136 functions as the Proton donor/acceptor in the catalytic mechanism.

This sequence belongs to the dCTP deaminase family. Homotrimer.

It carries out the reaction dCTP + H2O + H(+) = dUTP + NH4(+). It participates in pyrimidine metabolism; dUMP biosynthesis; dUMP from dCTP (dUTP route): step 1/2. Functionally, catalyzes the deamination of dCTP to dUTP. This Bordetella petrii (strain ATCC BAA-461 / DSM 12804 / CCUG 43448) protein is dCTP deaminase.